The following is a 639-amino-acid chain: Ubiquitin-like modifier-activating enzyme ATG7 (639 aa).

Positions 322–327 (GAGTLG) match the GXGXXG motif motif. Cys502 acts as the Glycyl thioester intermediate in catalysis.

Belongs to the ATG7 family. In terms of assembly, homodimer.

The protein localises to the cytoplasm. It localises to the preautophagosomal structure. E1-like activating enzyme involved in the 2 ubiquitin-like systems required for cytoplasm to vacuole transport (Cvt) and autophagy. Activates ATG12 for its conjugation with ATG5 and ATG8 for its conjugation with phosphatidylethanolamine. Both systems are needed for the ATG8 association to Cvt vesicles and autophagosomes membranes. Autophagy is essential for maintenance of amino acid levels and protein synthesis under nitrogen starvation. Required for selective autophagic degradation of the nucleus (nucleophagy) as well as for mitophagy which contributes to regulate mitochondrial quantity and quality by eliminating the mitochondria to a basal level to fulfill cellular energy requirements and preventing excess ROS production. Plays a role in the regulation of filamentous growth and chronological longevity. The polypeptide is Ubiquitin-like modifier-activating enzyme ATG7 (APG7) (Candida albicans (strain SC5314 / ATCC MYA-2876) (Yeast)).